The primary structure comprises 322 residues: Thioredoxin reductase (322 aa).

Residues 12–15 (SGPA), 34–42 (EGAVTAGGA), Asn51, and Val84 each bind FAD. Residues Cys136 and Cys139 are joined by a disulfide bond. Residues His176, Arg182, and Tyr259 each contribute to the NADP(+) site. Residues Asp279 and 286 to 289 (RQAI) contribute to the FAD site. Arg286 contributes to the NADP(+) binding site.

This sequence belongs to the class-II pyridine nucleotide-disulfide oxidoreductase family. As to quaternary structure, homodimer. It depends on FAD as a cofactor.

The catalysed reaction is [thioredoxin]-dithiol + NADP(+) = [thioredoxin]-disulfide + NADPH + H(+). Component of the thioredoxin-thioredoxin reductase system which may be involved in biosynthesis of penicillins and cephalosporins and may be important in determining the thiol-disulfide redox balance. This chain is Thioredoxin reductase, found in Streptomyces clavuligerus.